A 336-amino-acid polypeptide reads, in one-letter code: Mitochondrial import receptor subunit TOM40 homolog (336 aa).

Residues 1 to 58 form a disordered region; the sequence is MGNVLAASSPAPPPAGSPPVPGLVSVPPGFTMPPVAGLTPTPDKKEPQEERLPNPGTF. Pro residues predominate over residues 10–21; it reads PAPPPAGSPPVP. Residues 42–52 show a composition bias toward basic and acidic residues; the sequence is PDKKEPQEERL.

It belongs to the Tom40 family. Forms part of the preprotein translocase complex of the outer mitochondrial membrane (TOM complex). Interacts with mitochondrial targeting sequences.

Its subcellular location is the mitochondrion outer membrane. Channel-forming protein essential for import of protein precursors into mitochondria. This chain is Mitochondrial import receptor subunit TOM40 homolog (tomm40), found in Xenopus laevis (African clawed frog).